Consider the following 230-residue polypeptide: NAD(P)H-hydrate epimerase (230 aa).

Positions 11–218 (AIAVDQELFN…ALQRKYELNL (208 aa)) constitute a YjeF N-terminal domain. Residue 61 to 65 (NNGGD) participates in (6S)-NADPHX binding. Positions 62 and 126 each coordinate K(+). (6S)-NADPHX-binding positions include 130 to 136 (GFSFKPP) and D159. S162 lines the K(+) pocket.

Belongs to the NnrE/AIBP family. It depends on K(+) as a cofactor.

It catalyses the reaction (6R)-NADHX = (6S)-NADHX. The enzyme catalyses (6R)-NADPHX = (6S)-NADPHX. Catalyzes the epimerization of the S- and R-forms of NAD(P)HX, a damaged form of NAD(P)H that is a result of enzymatic or heat-dependent hydration. This is a prerequisite for the S-specific NAD(P)H-hydrate dehydratase to allow the repair of both epimers of NAD(P)HX. This chain is NAD(P)H-hydrate epimerase, found in Drosophila sechellia (Fruit fly).